The chain runs to 1344 residues: Xanthine dehydrogenase (1344 aa).

The 88-residue stretch at 9–96 folds into the 2Fe-2S ferredoxin-type domain; sequence SVLVFFVNGK…GCAVTTVEGI (88 aa). 8 residues coordinate [2Fe-2S] cluster: Cys-48, Cys-53, Cys-56, Cys-78, Cys-118, Cys-121, Cys-153, and Cys-155. Positions 236 to 425 constitute an FAD-binding PCMH-type domain; that stretch reads FSSERVTWYR…LGIHFQKTTP (190 aa). FAD contacts are provided by residues 264–271, Phe-344, 354–358, Asp-367, Leu-415, and Lys-433; these read LVVGNTEV and CLGGN. Positions 781 and 812 each coordinate Mo-molybdopterin. Glu-816 and Arg-894 together coordinate substrate. Mo-molybdopterin is bound at residue Arg-926. Phe-928 is a substrate binding site. Ala-1093 is a Mo-molybdopterin binding site. Residue Glu-1276 is the Proton acceptor of the active site.

It belongs to the xanthine dehydrogenase family. Homodimer. The cofactor is FAD. Mo-molybdopterin is required as a cofactor. It depends on [2Fe-2S] cluster as a cofactor.

It is found in the peroxisome. It catalyses the reaction xanthine + NAD(+) + H2O = urate + NADH + H(+). The catalysed reaction is hypoxanthine + NAD(+) + H2O = xanthine + NADH + H(+). Its function is as follows. Key enzyme in purine degradation. Catalyzes the oxidation of hypoxanthine to xanthine. Catalyzes the oxidation of xanthine to uric acid. The polypeptide is Xanthine dehydrogenase (Xdh) (Drosophila subobscura (Fruit fly)).